The following is a 577-amino-acid chain: Arginine--tRNA ligase (577 aa).

Positions 122–132 (PNVAKEMHVGH) match the 'HIGH' region motif.

Belongs to the class-I aminoacyl-tRNA synthetase family. Monomer.

The protein localises to the cytoplasm. It catalyses the reaction tRNA(Arg) + L-arginine + ATP = L-arginyl-tRNA(Arg) + AMP + diphosphate. This is Arginine--tRNA ligase from Vibrio vulnificus (strain CMCP6).